Consider the following 369-residue polypeptide: Phosphoribosyl pyrophosphate synthase-associated protein 2 (369 aa).

N-acetylmethionine is present on methionine 1. Residues serine 219, serine 227, and serine 233 each carry the phosphoserine modification.

It belongs to the ribose-phosphate pyrophosphokinase family. As to quaternary structure, binds to PRPS1 and PRPS2.

In terms of biological role, seems to play a negative regulatory role in 5-phosphoribose 1-diphosphate synthesis. The polypeptide is Phosphoribosyl pyrophosphate synthase-associated protein 2 (Prpsap2) (Mus musculus (Mouse)).